Here is a 44-residue protein sequence, read N- to C-terminus: Cytochrome b559 subunit beta (44 aa).

The helical transmembrane segment at 19-35 (WLAIHGLAIPTVFFLGA) threads the bilayer. Position 23 (H23) interacts with heme.

This sequence belongs to the PsbE/PsbF family. Heterodimer of an alpha subunit and a beta subunit. PSII is composed of 1 copy each of membrane proteins PsbA, PsbB, PsbC, PsbD, PsbE, PsbF, PsbH, PsbI, PsbJ, PsbK, PsbL, PsbM, PsbT, PsbX, PsbY, PsbZ, Psb30/Ycf12, at least 3 peripheral proteins of the oxygen-evolving complex and a large number of cofactors. It forms dimeric complexes. It depends on heme b as a cofactor.

The protein localises to the plastid. Its subcellular location is the chloroplast thylakoid membrane. Its function is as follows. This b-type cytochrome is tightly associated with the reaction center of photosystem II (PSII). PSII is a light-driven water:plastoquinone oxidoreductase that uses light energy to abstract electrons from H(2)O, generating O(2) and a proton gradient subsequently used for ATP formation. It consists of a core antenna complex that captures photons, and an electron transfer chain that converts photonic excitation into a charge separation. This Porphyra purpurea (Red seaweed) protein is Cytochrome b559 subunit beta.